The following is a 236-amino-acid chain: Purine nucleoside phosphorylase DeoD-type (236 aa).

His-5 serves as a coordination point for a purine D-ribonucleoside. Phosphate is bound by residues Gly-21, Arg-25, Arg-44, and 88 to 91 (RVGS). Residues 180 to 182 (DME) and 204 to 205 (SD) each bind a purine D-ribonucleoside. Asp-205 acts as the Proton donor in catalysis.

It belongs to the PNP/UDP phosphorylase family. As to quaternary structure, homohexamer; trimer of homodimers.

The enzyme catalyses a purine D-ribonucleoside + phosphate = a purine nucleobase + alpha-D-ribose 1-phosphate. The catalysed reaction is a purine 2'-deoxy-D-ribonucleoside + phosphate = a purine nucleobase + 2-deoxy-alpha-D-ribose 1-phosphate. Its function is as follows. Catalyzes the reversible phosphorolytic breakdown of the N-glycosidic bond in the beta-(deoxy)ribonucleoside molecules, with the formation of the corresponding free purine bases and pentose-1-phosphate. The sequence is that of Purine nucleoside phosphorylase DeoD-type from Aliivibrio salmonicida (strain LFI1238) (Vibrio salmonicida (strain LFI1238)).